The chain runs to 905 residues: Protein translocase subunit SecA (905 aa).

ATP is bound by residues Gln-86, 104 to 108 (GEGKT), and Asp-499. Zn(2+) contacts are provided by Cys-890, Cys-892, Cys-901, and His-902.

Belongs to the SecA family. In terms of assembly, monomer and homodimer. Part of the essential Sec protein translocation apparatus which comprises SecA, SecYEG and auxiliary proteins SecDF-YajC and YidC. The cofactor is Zn(2+).

The protein resides in the cell inner membrane. It localises to the cytoplasm. It carries out the reaction ATP + H2O + cellular proteinSide 1 = ADP + phosphate + cellular proteinSide 2.. Part of the Sec protein translocase complex. Interacts with the SecYEG preprotein conducting channel. Has a central role in coupling the hydrolysis of ATP to the transfer of proteins into and across the cell membrane, serving both as a receptor for the preprotein-SecB complex and as an ATP-driven molecular motor driving the stepwise translocation of polypeptide chains across the membrane. This Rickettsia typhi (strain ATCC VR-144 / Wilmington) protein is Protein translocase subunit SecA.